The chain runs to 100 residues: Putative insulin-like peptide beta-type 6 (100 aa).

The first 18 residues, 1 to 18 (MHSIVALMLIGTILPIAA), serve as a signal peptide directing secretion. 4 cysteine pairs are disulfide-bonded: C54–C83, C66–C96, C70–C97, and C82–C87.

Belongs to the insulin family.

The protein localises to the secreted. The chain is Putative insulin-like peptide beta-type 6 (ins-5) from Caenorhabditis elegans.